A 686-amino-acid chain; its full sequence is Epsin (686 aa).

The ENTH domain maps to 14 to 145 (DAVLNTPEIE…QDDQRIKEER (132 aa)). 2 disordered regions span residues 177–417 (YDSD…FNNN) and 463–571 (NSSM…TMRP). The segment covering 185-211 (NQRDSYGGNQRDSYGGNQRDSYGGNQR) has biased composition (polar residues). Residues 212–225 (ETTRRDSFNGRDEG) are compositionally biased toward basic and acidic residues. Residues 237–256 (SYDSDPYSNTRAEYENYSNR) are compositionally biased toward polar residues. Low complexity-rich tracts occupy residues 269-340 (SNNS…SGPS) and 383-417 (NNTNNNNNNNNNNSNSFGGFQSVNNNQNSFNFNNN). Over residues 491-503 (FDQQSGDFSNKND) the composition is skewed to polar residues. Positions 504–521 (GQQKPKDTNDPWSKKDLF) are enriched in basic and acidic residues. Residues 527–547 (GNQNPNQSPVNNTNNNNNGNT) are compositionally biased toward low complexity. The segment covering 558–567 (PITSAGSTIP) has biased composition (polar residues).

It belongs to the epsin family.

The protein localises to the membrane. It localises to the clathrin-coated pit. Its function is as follows. Binds to membranes enriched in phosphatidylinositol 4,5-bisphosphate (PtdIns(4,5)P2). The chain is Epsin (epnA) from Dictyostelium discoideum (Social amoeba).